We begin with the raw amino-acid sequence, 1044 residues long: MFKKVENKVHFPQLEEKILQFWNDNKIFEKSMKQREGCEEFTFYDGPPFATGLPHFGHFVPNTIKDIIPRYQTMKGKHVKRYFGWDTHGLPVEYEVEKSLKLSGRYEIEQYGIDKFNEECRNIVLRYTKEWKKIITRLGRWVDFENNYKTMDLTFMESVWWVFKTLYNKGLIYESYYVLPYSPKLATPLSNFEVNLGEYKEIHDPSLTIKFKIKDKNEYLLAWTTTPWTLPTNLGIAVGKDIDYSKVLDQEKNEIYIIGTKRLNHYYQDENKYVIIEQFKGEHLKGIEYEPLFDYFVNQRNKGAFKIHTAEYVTTDDGTGIVHIAPFGEEDYQILKKNTQTDMITPIDAECKFTSEVKDFEGLFVKDADNKIIEKLKSMNLLFKRENYLHRYPFCYRTNSPLIYRPISSWFVNIEKIKEKLIRSNEQINWIPEHLKKGRFGKWLENARDWAISRNRFWGNPIPIWKCSKTGNKICIGSREELEKLSGQKIIDLHKDKIDKITWPSKYGGTYVRTSEVLDCWFESGSMPYASKHYPFKDKDKFQNIFPADFIAEGLDQTRGWFYTLTILGTALFEKTAFKNVIVNGLVLSSDGKKMSKSLKNYTDPIQIINTFGADALRLYLIMSPVIKADDLKYSDDGVKDVLKNIIIPIWNAYSFFITYAIIDKFTPNNHVNLYKTNILDKWIISEIESLKQILNEEIDKYNLTKSIDVLLTFIDKLNNWYIRRSRRRFWKSENDNDKTDAYETLYYTLKNLMLMLAPFIPFLTEEIYQNLKTKNEKESIHLNDYPQSIKELINIELEEKMNFTRKVITIARALRASHNIKIRKPIKTIYIITKNHKEQNTLREMTEIILEEINAKEIKIKSNEEELVTYKAKANFKELGSKLGTNMKSVALAITKLSNEDILEIINGNKHTITINNNTYDITLKDIILERHERKNLKVINEDSITIGLDTLITEELYLEGLSRELIRKVQNLRKESNFNVTDRIILYTNNDEILTKIINNFENYIKTETLAITIEINNKKALKTLELDEEISVNIGIEKCLN.

Residues 48-58 carry the 'HIGH' region motif; that stretch reads PFATGLPHFGH. A 'KMSKS' region motif is present at residues 594 to 598; it reads KMSKS. Lysine 597 lines the ATP pocket.

This sequence belongs to the class-I aminoacyl-tRNA synthetase family. IleS type 2 subfamily. As to quaternary structure, monomer. The cofactor is Zn(2+).

It is found in the cytoplasm. It carries out the reaction tRNA(Ile) + L-isoleucine + ATP = L-isoleucyl-tRNA(Ile) + AMP + diphosphate. Its function is as follows. Catalyzes the attachment of isoleucine to tRNA(Ile). As IleRS can inadvertently accommodate and process structurally similar amino acids such as valine, to avoid such errors it has two additional distinct tRNA(Ile)-dependent editing activities. One activity is designated as 'pretransfer' editing and involves the hydrolysis of activated Val-AMP. The other activity is designated 'posttransfer' editing and involves deacylation of mischarged Val-tRNA(Ile). The protein is Isoleucine--tRNA ligase of Borrelia duttonii (strain Ly).